The following is a 469-amino-acid chain: Spermatogenesis-associated protein 21 (469 aa).

Disordered regions lie at residues 1–76 (MDNR…AGTQ) and 99–157 (HRRA…MGAP). The segment covering 49–61 (EVRDIGERREPDR) has biased composition (basic and acidic residues). A compositionally biased stretch (low complexity) spans 62-73 (AQQQPQKPAVAA). Residues 105–132 (ARSQTAQKSPRTLTPVPTSAPSLPQTPA) show a composition bias toward polar residues. The span at 146-157 (APGPEPAPMGAP) shows a compositional bias: pro residues. Residues 198–225 (EPEEQSLQKLYQNREKSEEQLTLKQEEA) are a coiled coil. An EF-hand domain is found at 255 to 290 (VTLAQVEDALMSADVNGDGRVDFKDFLAVMTDTRRF). Ca(2+) contacts are provided by Asp-268, Asn-270, Asp-272, Arg-274, and Asp-279. A disordered region spans residues 424-469 (YALDQCTPPGLDPDIRSPFFQSGSQGNREHNSDSRKWLSSVPARTH). Residues 450 to 459 (NREHNSDSRK) are compositionally biased toward basic and acidic residues.

Its function is as follows. Involved in the differentiation of haploid spermatids. The sequence is that of Spermatogenesis-associated protein 21 (SPATA21) from Homo sapiens (Human).